The sequence spans 669 residues: Diacylglycerol lipase-beta (669 aa).

At 1–17 the chain is on the cytoplasmic side; the sequence is MPGMVLFGRRWSLASDD. Residues 18 to 38 traverse the membrane as a helical segment; sequence LVFPGSFELFLRVLWWIVSLT. At 39 to 58 the chain is on the extracellular side; the sequence is LYLTHRRRLDCPGGVLLSTY. Residues 59–79 form a helical membrane-spanning segment; that stretch reads LIVLLVLLAVIICTVLAIVCV. At 80–102 the chain is on the cytoplasmic side; it reads SMRGTICNPGPRKSMSKLLYIRL. The chain crosses the membrane as a helical span at residues 103–123; it reads ALFLPEMVWASLGAAWVAKGI. The Extracellular portion of the chain corresponds to 124 to 128; it reads QCDRT. A helical membrane pass occupies residues 129–149; that stretch reads VVIGIIATVIVSWIVIAATMV. The Cytoplasmic portion of the chain corresponds to 150 to 669; that stretch reads TIIFVFDPLG…CPGQGGSSVP (520 aa). Residues serine 443 and aspartate 495 each act as charge relay system in the active site. Serine 570, serine 578, and serine 582 each carry phosphoserine.

It belongs to the AB hydrolase superfamily. Lipase family. The cofactor is Ca(2+). Expressed in liver and immune cells such as macrophages and microglias. In embryonic brains present in axonal tracts, while in adults localizes to dendritic fields, correlating with the developmental change in requirement for 2-AG synthesis from the pre- to the postsynaptic compartment (at protein level).

It localises to the cell membrane. It catalyses the reaction a 1,2-diacyl-sn-glycerol + H2O = a 2-acylglycerol + a fatty acid + H(+). The catalysed reaction is 1-octadecanoyl-2-(5Z,8Z,11Z,14Z-eicosatetraenoyl)-sn-glycerol + H2O = 2-(5Z,8Z,11Z,14Z-eicosatetraenoyl)-glycerol + octadecanoate + H(+). It carries out the reaction 1,2-di-(9Z-octadecenoyl)-sn-glycerol + H2O = 2-(9Z-octadecenoyl)-glycerol + (9Z)-octadecenoate + H(+). The enzyme catalyses 1-(9Z-octadecenoyl)-2-(5Z,8Z,11Z,14Z-eicosatetraenoyl)-sn-glycerol + H2O = 2-(5Z,8Z,11Z,14Z-eicosatetraenoyl)-glycerol + (9Z)-octadecenoate + H(+). It catalyses the reaction 1-(9Z-octadecenoyl)-2-octadecanoyl-sn-glycerol + H2O = 2-octadecanoylglycerol + (9Z)-octadecenoate + H(+). The catalysed reaction is 1-(9Z-octadecenoyl)-2-(9Z,12Z-octadecadienoyl)-sn-glycerol + H2O = 2-(9Z,12Z-octadecadienoyl)-glycerol + (9Z)-octadecenoate + H(+). It carries out the reaction 1-(9Z-octadecenoyl)-2-O-(5Z,8Z,11Z,14Z-eicosatetraenyl)-sn-glycerol + H2O = 2-O-(5Z,8Z,11Z,14Z)-eicosatetraenylglycerol + (9Z)-octadecenoate + H(+). The enzyme catalyses a triacylglycerol + H2O = a diacylglycerol + a fatty acid + H(+). It catalyses the reaction 1,2,3-tri-(5Z,8Z,11Z,14Z-eicosatetraenoyl)-glycerol + H2O = 1,2-di-(5Z,8Z,11Z,14Z-eicosatetraenoyl)-glycerol + (5Z,8Z,11Z,14Z)-eicosatetraenoate + H(+). The catalysed reaction is 1,2,3-(4Z,7Z,10Z,13Z,16Z,19Z-docosahexaenoyl)-glycerol + H2O = 1,2-di-(4Z,7Z,10Z,13Z,16Z,19Z-docosahexaenoyl)-glycerol + (4Z,7Z,10Z,13Z,16Z,19Z)-docosahexaenoate + H(+). Its activity is regulated as follows. Inhibited by the 1,2,3-triazole urea covalent inhibitors KT109 and KT172. Inhibited by p-hydroxy-mercuri-benzoate and HgCl(2), but not by PMSF. Also inhibited by RHC80267, a drug that blocks 2-AG formation. Lipase that catalyzes the hydrolysis of arachidonic acid (AA)-esterified diacylglycerols (DAGs) to produce the principal endocannabinoid, 2-arachidonoylglycerol (2-AG) which can be further cleaved by downstream enzymes to release arachidonic acid (AA) for cyclooxygenase (COX)-mediated eicosanoid production. Preferentially hydrolyzes DAGs at the sn-1 position in a calcium-dependent manner and has negligible activity against other lipids including monoacylglycerols and phospholipids. Plays a key role in the regulation of 2-AG and AA pools utilized by COX1/2 to generate lipid mediators of macrophage and microglia inflammatory responses. Also functions as a polyunsaturated fatty acids-specific triacylglycerol lipase in macrophages. Plays an important role to support the metabolic and signaling demands of macrophages. In Mus musculus (Mouse), this protein is Diacylglycerol lipase-beta (Daglb).